A 414-amino-acid chain; its full sequence is Procollagen C-endopeptidase enhancer 2 (414 aa).

The first 22 residues, 1 to 22 (MGGASACIPLCLLLATARMARP), serve as a signal peptide directing secretion. 7 disulfide bridges follow: Cys32/Cys58, Cys85/Cys106, Cys153/Cys180, Cys207/Cys230, Cys296/Cys363, Cys300/Cys366, and Cys311/Cys414. 2 consecutive CUB domains span residues 32–143 (CGGI…YSAA) and 153–267 (CGGR…YKFR). Residues 296–414 (CQQKCRRMGT…PMNALKNKQC (119 aa)) form the NTR domain. An N-linked (GlcNAc...) asparagine glycan is attached at Asn354.

Interacts with heparin with high affinity, and type I or II collagen. In terms of processing, O-glycosylated; contains sialic acid.

It is found in the secreted. Its function is as follows. Binds to the C-terminal propeptide of types I and II procollagens and may enhance the cleavage of that propeptide by BMP1. This is Procollagen C-endopeptidase enhancer 2 (Pcolce2) from Mus musculus (Mouse).